The sequence spans 515 residues: Hyccin (515 aa).

The segment covering 358–378 (STSQSALSNSSNTSSKNLLGK) has biased composition (low complexity). Disordered regions lie at residues 358–410 (STSQ…TQRA) and 491–515 (TDLP…LSTD). Residues 389-403 (AGREKEGETCREHLS) are compositionally biased toward basic and acidic residues. Over residues 498 to 515 (KQPNQQRPPSISITLSTD) the composition is skewed to polar residues.

It belongs to the Hyccin family. Component of a phosphatidylinositol 4-kinase (PI4K) complex.

The protein localises to the cytoplasm. Its subcellular location is the cytosol. It localises to the cell membrane. Its function is as follows. Component of a complex required to localize phosphatidylinositol 4-kinase (PI4K) to the plasma membrane. The complex acts as a regulator of phosphatidylinositol 4-phosphate (PtdIns(4)P) synthesis. The polypeptide is Hyccin (HYCC1) (Gallus gallus (Chicken)).